Consider the following 363-residue polypeptide: Adenosine deaminase (363 aa).

Residues H42 and H44 each coordinate Zn(2+). A purine D-ribonucleoside-binding positions include 44 to 46 (HLD), D172, and G201. The gating helix loop; regulates binding affinity for substrates and thus substrate selectivity stretch occupies residues 170 to 184 (IGDTGHRAADIKASA). H226 serves as a coordination point for Zn(2+). A purine D-ribonucleoside is bound by residues E229, H253, and D310. Position 310 (D310) interacts with Zn(2+).

It belongs to the metallo-dependent hydrolases superfamily. Adenosine and AMP deaminases family. Zn(2+) serves as cofactor.

It catalyses the reaction adenosine + H2O + H(+) = inosine + NH4(+). The enzyme catalyses S-methyl-5'-thioadenosine + H2O + H(+) = S-methyl-5'-thioinosine + NH4(+). It participates in purine metabolism; purine nucleoside salvage. Its activity is regulated as follows. Inhibited by coformycin and methylthiocoformycin (MT-coformycin). In terms of biological role, catalyzes the hydrolytic deamination of adenosine to produce inosine. Unlike mammalian adenosine deaminases, also catalyzes the deamination of 5'-methylthioadenosine (MTA), a by-product of polyamine biosynthesis, to produce 5'-methylthioinosine (MTI). Plays an essential role in the purine salvage pathway which allows the parasite to use host cell purines for the synthesis of nucleic acids. This chain is Adenosine deaminase, found in Plasmodium knowlesi.